A 486-amino-acid polypeptide reads, in one-letter code: Cobyric acid synthase (486 aa).

A GATase cobBQ-type domain is found at 248–439 (VLRIVVPALP…LHGLFDTPHA (192 aa)). Cysteine 328 functions as the Nucleophile in the catalytic mechanism. The active site involves histidine 431.

Belongs to the CobB/CobQ family. CobQ subfamily.

It participates in cofactor biosynthesis; adenosylcobalamin biosynthesis. In terms of biological role, catalyzes amidations at positions B, D, E, and G on adenosylcobyrinic A,C-diamide. NH(2) groups are provided by glutamine, and one molecule of ATP is hydrogenolyzed for each amidation. This is Cobyric acid synthase from Burkholderia mallei (strain ATCC 23344).